Here is a 286-residue protein sequence, read N- to C-terminus: Fructose-bisphosphate aldolase (286 aa).

S50 is a D-glyceraldehyde 3-phosphate binding site. The active-site Proton donor is the D85. Residues H86, D107, E137, and H181 each contribute to the Zn(2+) site. G182 contributes to the dihydroxyacetone phosphate binding site. H209 contacts Zn(2+). Dihydroxyacetone phosphate is bound by residues 210–212 (GGT) and 231–234 (NVNT).

The protein belongs to the class II fructose-bisphosphate aldolase family. It depends on Zn(2+) as a cofactor.

The enzyme catalyses beta-D-fructose 1,6-bisphosphate = D-glyceraldehyde 3-phosphate + dihydroxyacetone phosphate. Its pathway is carbohydrate degradation; glycolysis; D-glyceraldehyde 3-phosphate and glycerone phosphate from D-glucose: step 4/4. Functionally, catalyzes the aldol condensation of dihydroxyacetone phosphate (DHAP or glycerone-phosphate) with glyceraldehyde 3-phosphate (G3P) to form fructose 1,6-bisphosphate (FBP) in gluconeogenesis and the reverse reaction in glycolysis. The sequence is that of Fructose-bisphosphate aldolase (fba) from Staphylococcus epidermidis (strain ATCC 35984 / DSM 28319 / BCRC 17069 / CCUG 31568 / BM 3577 / RP62A).